The sequence spans 255 residues: (R)-S-adenosyl-L-methionine hydrolase (255 aa).

Adenosine is bound by residues Asp9, Asp70, and Asn186. 4 residues coordinate (R)-S-adenosyl-L-methionine: Asn186, Ser227, Glu232, and Val235. Val235 is an adenosine binding site.

Belongs to the SAM hydrolase / SAM-dependent halogenase family. In terms of assembly, homotrimer.

It carries out the reaction (R)-S-adenosyl-L-methionine + H2O = adenosine + L-methionine + H(+). Catalyzes the hydrolysis of S-adenosyl-L-methionine (SAM) into adenosine and L-methionine. Does not have chlorinase or fluorinase activity. The chain is (R)-S-adenosyl-L-methionine hydrolase from Thermus thermophilus (strain ATCC 27634 / DSM 579 / HB8).